A 958-amino-acid polypeptide reads, in one-letter code: Isoleucine--tRNA ligase (958 aa).

The segment at 1 to 32 is disordered; sequence MSDNQNKPGKPAAKPQSKYPVNMTDTPFPMRG. The 'HIGH' region motif lies at 71 to 81; sequence PYANGDIHLGH. E590 lines the L-isoleucyl-5'-AMP pocket. A 'KMSKS' region motif is present at residues 631–635; it reads KMSKS. Residue K634 coordinates ATP. The Zn(2+) site is built by C921, C924, C941, and C944.

This sequence belongs to the class-I aminoacyl-tRNA synthetase family. IleS type 1 subfamily. As to quaternary structure, monomer. It depends on Zn(2+) as a cofactor.

It localises to the cytoplasm. The catalysed reaction is tRNA(Ile) + L-isoleucine + ATP = L-isoleucyl-tRNA(Ile) + AMP + diphosphate. Functionally, catalyzes the attachment of isoleucine to tRNA(Ile). As IleRS can inadvertently accommodate and process structurally similar amino acids such as valine, to avoid such errors it has two additional distinct tRNA(Ile)-dependent editing activities. One activity is designated as 'pretransfer' editing and involves the hydrolysis of activated Val-AMP. The other activity is designated 'posttransfer' editing and involves deacylation of mischarged Val-tRNA(Ile). The chain is Isoleucine--tRNA ligase from Janthinobacterium sp. (strain Marseille) (Minibacterium massiliensis).